Reading from the N-terminus, the 301-residue chain is MSRQNAGPGFGPGIVVVDKPGAMTSHDVVGRCRRIFGTRRLGHAGTLDPMATGVLVIGIERATKILGLLIATSKSYAATIRLGQTTSTEDAEGEPLASVSAEHVAPEAIAAAILDLTGDIRQVPSAVSAIKVDGRRAYQLAREGQTVELAARPVRIDRFELMDLRRGADVIDIDVEVDCSSGTYIRALARDLGAALDVGGHLTSLRRTRVSHFDLSQAASLDELAERPALSLTLDQACLLMFPRRDLTVDESQSVGNGRPLEPAGIDGIYAASDADGRVIALLRDEGRRTKSVVVIRPATM.

Asp48 (nucleophile) is an active-site residue.

The protein belongs to the pseudouridine synthase TruB family. Type 1 subfamily.

It carries out the reaction uridine(55) in tRNA = pseudouridine(55) in tRNA. In terms of biological role, responsible for synthesis of pseudouridine from uracil-55 in the psi GC loop of transfer RNAs. The sequence is that of tRNA pseudouridine synthase B from Mycobacterium ulcerans (strain Agy99).